A 185-amino-acid chain; its full sequence is uncharacterized protein (185 aa).

4 consecutive transmembrane segments (helical) span residues S5–L25, L63–I83, F97–I117, and I149–F169.

The protein belongs to the YggT family.

It localises to the cell membrane. This is an uncharacterized protein from Vibrio alginolyticus.